We begin with the raw amino-acid sequence, 394 residues long: Immune-associated nucleotide-binding protein 12 (394 aa).

The 207-residue stretch at 45 to 251 folds into the AIG1-type G domain; the sequence is KPARTLLLVG…YMADLSHEIR (207 aa). A G1 region spans residues 54–61; sequence GRSGNGKS. GTP contacts are provided by residues 54 to 62 and Ser-75; that span reads GRSGNGKSA. Positions 81 to 85 are G2; the sequence is GVTTA. Positions 103–106 are G3; it reads DTPG. The interval 173–176 is G4; that stretch reads TNED. The tract at residues 210–212 is G5; that stretch reads RNR. Asn-211 is a GTP binding site. A coiled-coil region spans residues 289–387; that stretch reads NQQLRQMMER…KQMATDLQKS (99 aa).

It belongs to the TRAFAC class TrmE-Era-EngA-EngB-Septin-like GTPase superfamily. AIG1/Toc34/Toc159-like paraseptin GTPase family. IAN subfamily.

The chain is Immune-associated nucleotide-binding protein 12 from Arabidopsis thaliana (Mouse-ear cress).